A 314-amino-acid polypeptide reads, in one-letter code: tRNA dimethylallyltransferase (314 aa).

13 to 20 (GPTAVGKT) lines the ATP pocket. A substrate-binding site is contributed by 15-20 (TAVGKT). The segment at 38-41 (DSMQ) is interaction with substrate tRNA.

This sequence belongs to the IPP transferase family. Monomer. It depends on Mg(2+) as a cofactor.

The catalysed reaction is adenosine(37) in tRNA + dimethylallyl diphosphate = N(6)-dimethylallyladenosine(37) in tRNA + diphosphate. In terms of biological role, catalyzes the transfer of a dimethylallyl group onto the adenine at position 37 in tRNAs that read codons beginning with uridine, leading to the formation of N6-(dimethylallyl)adenosine (i(6)A). The polypeptide is tRNA dimethylallyltransferase (Bacillus licheniformis (strain ATCC 14580 / DSM 13 / JCM 2505 / CCUG 7422 / NBRC 12200 / NCIMB 9375 / NCTC 10341 / NRRL NRS-1264 / Gibson 46)).